Reading from the N-terminus, the 503-residue chain is Puromycin resistance protein pur8 (503 aa).

At 1-24 the chain is on the cytoplasmic side; sequence MARKPDISAVPVESAACQGPDPRR. A helical membrane pass occupies residues 25 to 45; that stretch reads WWGLVVILAAQLLVVLDGTVV. Residues 46–64 are Extracellular-facing; it reads NIALPSVQRDLGMSDTSRQ. Residues 65-85 form a helical membrane-spanning segment; sequence WVITAYTLAFGGLLLLGGRVA. Topologically, residues 86 to 92 are cytoplasmic; sequence DAFGRRR. The chain crosses the membrane as a helical span at residues 93–113; sequence IFAVGILGFGLASLLGGAAPD. The Extracellular segment spans residues 114-122; sequence PGTLFLARA. A helical membrane pass occupies residues 123–143; it reads LQGVFAAALAPAALALINTLF. Over 144 to 152 the chain is Cytoplasmic; that stretch reads TEPGERGKA. The helical transmembrane segment at 153 to 173 threads the bilayer; the sequence is FGVYGAVSGGGAAVGLLAGGL. Over 174–181 the chain is Extracellular; that stretch reads LTEYLDWR. The chain crosses the membrane as a helical span at residues 182–202; that stretch reads WCLYVNAPVALLALLGCRLLP. The Cytoplasmic segment spans residues 203-212; it reads RDRRTGRAVR. The chain crosses the membrane as a helical span at residues 213 to 233; sequence LDLPGTLLGCGGLVAIVYAFA. The Extracellular portion of the chain corresponds to 234-241; sequence EAESGWGD. The chain crosses the membrane as a helical span at residues 242-262; sequence PLVVRLLVLGVLMLVAFALVE. At 263–280 the chain is on the cytoplasmic side; it reads RRVQDPLLPPGVVAHRVR. A helical transmembrane segment spans residues 281–301; that stretch reads GGSFLVVGLPQIGLFGLFLFL. Over 302 to 313 the chain is Extracellular; the sequence is TYYLQGILDYSP. The chain crosses the membrane as a helical span at residues 314–334; sequence VLTGVAFLPLGLGIAVGSSLI. Residues 335–346 lie on the Cytoplasmic side of the membrane; it reads AARLLPRTRPRT. A helical transmembrane segment spans residues 347-367; sequence LIVGALLAAAAGMALLTRLEP. At 368–371 the chain is on the extracellular side; it reads DTPQ. The helical transmembrane segment at 372-392 threads the bilayer; the sequence is VYLTHLLPAQILIGLGIGCMM. The Cytoplasmic portion of the chain corresponds to 393–422; sequence MPAMHTATARVAPHEAGAAAAVVNSAQQVG. Residues 423 to 443 traverse the membrane as a helical segment; the sequence is GALGVALLNTVSTGATAAYLA. At 444 to 461 the chain is on the extracellular side; it reads DHGTSPAATVDGTVHGYT. A helical transmembrane segment spans residues 462 to 482; it reads VAIAFAVGVLLLTAVLAWVLI. The Cytoplasmic segment spans residues 483–503; that stretch reads DSRTEAADETGSASVTPARPR.

This sequence belongs to the major facilitator superfamily. EmrB family.

The protein localises to the cell membrane. Its function is as follows. May be involved in active puromycin efflux energized by a proton-dependent electrochemical gradient. In addition, it could be implicated in secreting N-acetylpuromycin, the last intermediate of the puromycin biosynthesis pathway, to the environment. This chain is Puromycin resistance protein pur8 (pur8), found in Streptomyces alboniger.